The primary structure comprises 653 residues: Extracellular metalloproteinase (653 aa).

The N-terminal stretch at 1 to 19 is a signal peptide; sequence MRSFLLASLASLSVISVYG. A propeptide spanning residues 20–244 is cleaved from the precursor; sequence HPHARSTLTR…VHAVVDYSAD (225 aa). 3 N-linked (GlcNAc...) asparagine glycosylation sites follow: asparagine 327, asparagine 336, and asparagine 412. Histidine 429 contributes to the Zn(2+) binding site. The active site involves glutamate 430. Histidine 433 contacts Zn(2+). N-linked (GlcNAc...) asparagine glycosylation is found at asparagine 636 and asparagine 637.

It belongs to the peptidase M36 family. Requires Zn(2+) as cofactor.

The protein localises to the secreted. In terms of biological role, secreted metalloproteinase that allows assimilation of proteinaceous substrates. The protein is Extracellular metalloproteinase (MEP) of Pyrenophora tritici-repentis (strain Pt-1C-BFP) (Wheat tan spot fungus).